A 1159-amino-acid polypeptide reads, in one-letter code: DNA-directed RNA polymerase subunit beta (1159 aa).

Belongs to the RNA polymerase beta chain family. As to quaternary structure, the RNAP catalytic core consists of 2 alpha, 1 beta, 1 beta' and 1 omega subunit. When a sigma factor is associated with the core the holoenzyme is formed, which can initiate transcription.

It catalyses the reaction RNA(n) + a ribonucleoside 5'-triphosphate = RNA(n+1) + diphosphate. In terms of biological role, DNA-dependent RNA polymerase catalyzes the transcription of DNA into RNA using the four ribonucleoside triphosphates as substrates. The sequence is that of DNA-directed RNA polymerase subunit beta from Deinococcus radiodurans (strain ATCC 13939 / DSM 20539 / JCM 16871 / CCUG 27074 / LMG 4051 / NBRC 15346 / NCIMB 9279 / VKM B-1422 / R1).